Here is a 685-residue protein sequence, read N- to C-terminus: MNENISVSVRARPFNEKEVKDKEHCLWQFGNNNTITSLPPPITQPVSSLPPISTPIKSSSSSSTSTSAGSLKTPLKTPLKTPLKTPLKTNSTTTNTTVPASPAPTSSLTSKFVSNSYTYDHLFPPTCDNYEVYDTVARELVKSAMEGYNASIMAYGITSSGKTFTMTGSGKKNPGIIPLSIQDIFTYIQECKEREFLLRVSYLEIYNETVNDLLGVNQENFNLKIHEHPVTGVYVAGLKEEIVLSVEHVLSLISAGEAHRHVGSTSYNLQSSRSHTIFKMIIESKEVLPEGSGSGGLESPVRYSTLNLIDLAGSEKASESTISAIRNKEGSYINKSLLTLGTVISKLSEKDTGYIPYRDSKLTRVLQNSLSGNSRVAIICTITLASNNFEESHNTLKFASRAKKISNNAKVNEILDDKALLKQYRNEIAELKSKLSDALSTEKELQETLTEKEKMKITNQELLHKLVDAEKHRSLLESKINNLNKLILVSTSVNNSASKGGSGSGNGNGSRSTFVSPSQNSHHHHGDLGSITPNSFSNLLLQSPSQNNNNNSHISPLSQSTSSLTIGGGSGNGFESNELIQIQSKMAKLELELEEKNKKIDFLTSFNQDSALEKIKQLEGELVQRDMDLGLYQRESTRLQTLLSHKDEKISSLESKLRDILLKFKQIDSENTSLKSKIQEYEVMY.

The region spanning 4–405 (NISVSVRARP…LKFASRAKKI (402 aa)) is the Kinesin motor domain. A disordered region spans residues 36–105 (TSLPPPITQP…TTVPASPAPT (70 aa)). Low complexity predominate over residues 47 to 105 (SSLPPISTPIKSSSSSSTSTSAGSLKTPLKTPLKTPLKTPLKTNSTTTNTTVPASPAPT). Position 156–163 (156–163 (GITSSGKT)) interacts with ATP. Residues 411 to 488 (VNEILDDKAL…KINNLNKLIL (78 aa)) are a coiled coil. A disordered region spans residues 495–568 (NSASKGGSGS…QSTSSLTIGG (74 aa)). A compositionally biased stretch (polar residues) spans 511–520 (RSTFVSPSQN). Residues 533–565 (PNSFSNLLLQSPSQNNNNNSHISPLSQSTSSLT) are compositionally biased toward low complexity. Residues 574–683 (FESNELIQIQ…LKSKIQEYEV (110 aa)) are a coiled coil.

This sequence belongs to the TRAFAC class myosin-kinesin ATPase superfamily. Kinesin family.

The protein localises to the cytoplasm. It localises to the cytoskeleton. Microtubule-associated force-producing protein that plays a role in organelle transport. Its motor activity is directed toward the microtubule's plus end. This Dictyostelium discoideum (Social amoeba) protein is Kinesin-related protein 11 (kif11).